The primary structure comprises 200 residues: ATP-dependent Clp protease proteolytic subunit (200 aa).

Ser103 functions as the Nucleophile in the catalytic mechanism. Residue His128 is part of the active site.

It belongs to the peptidase S14 family. Fourteen ClpP subunits assemble into 2 heptameric rings which stack back to back to give a disk-like structure with a central cavity, resembling the structure of eukaryotic proteasomes.

It is found in the cytoplasm. The enzyme catalyses Hydrolysis of proteins to small peptides in the presence of ATP and magnesium. alpha-casein is the usual test substrate. In the absence of ATP, only oligopeptides shorter than five residues are hydrolyzed (such as succinyl-Leu-Tyr-|-NHMec, and Leu-Tyr-Leu-|-Tyr-Trp, in which cleavage of the -Tyr-|-Leu- and -Tyr-|-Trp bonds also occurs).. In terms of biological role, cleaves peptides in various proteins in a process that requires ATP hydrolysis. Has a chymotrypsin-like activity. Plays a major role in the degradation of misfolded proteins. In Vibrio parahaemolyticus serotype O3:K6 (strain RIMD 2210633), this protein is ATP-dependent Clp protease proteolytic subunit.